The chain runs to 81 residues: Photosystem I iron-sulfur center (81 aa).

4Fe-4S ferredoxin-type domains lie at 2–31 (SHSVKIYDTCIGCTQCVRACPTDVLEMIPW) and 39–68 (IASAPRTEDCVGCKRCESACPTDFLSVRVY). Positions 11, 14, 17, 21, 48, 51, 54, and 58 each coordinate [4Fe-4S] cluster.

In terms of assembly, the eukaryotic PSI reaction center is composed of at least 11 subunits. The cofactor is [4Fe-4S] cluster.

It is found in the plastid thylakoid membrane. It catalyses the reaction reduced [plastocyanin] + hnu + oxidized [2Fe-2S]-[ferredoxin] = oxidized [plastocyanin] + reduced [2Fe-2S]-[ferredoxin]. Functionally, apoprotein for the two 4Fe-4S centers FA and FB of photosystem I (PSI); essential for photochemical activity. FB is the terminal electron acceptor of PSI, donating electrons to ferredoxin. The C-terminus interacts with PsaA/B/D and helps assemble the protein into the PSI complex. Required for binding of PsaD and PsaE to PSI. PSI is a plastocyanin-ferredoxin oxidoreductase, converting photonic excitation into a charge separation, which transfers an electron from the donor P700 chlorophyll pair to the spectroscopically characterized acceptors A0, A1, FX, FA and FB in turn. The protein is Photosystem I iron-sulfur center of Cuscuta gronovii (Common dodder).